The following is a 430-amino-acid chain: Tyrosine--tRNA ligase (430 aa).

Residue tyrosine 32 participates in L-tyrosine binding. The 'HIGH' region signature appears at 37–46; sequence PTADSLHIGH. Positions 172 and 176 each coordinate L-tyrosine. The short motif at 232–236 is the 'KMSKS' region element; the sequence is KFGKT. Residue lysine 235 coordinates ATP. The region spanning 362 to 430 is the S4 RNA-binding domain; the sequence is ISLVDLLADA…KKSYYLIIVE (69 aa).

It belongs to the class-I aminoacyl-tRNA synthetase family. TyrS type 1 subfamily. Homodimer.

It is found in the cytoplasm. It carries out the reaction tRNA(Tyr) + L-tyrosine + ATP = L-tyrosyl-tRNA(Tyr) + AMP + diphosphate + H(+). Catalyzes the attachment of tyrosine to tRNA(Tyr) in a two-step reaction: tyrosine is first activated by ATP to form Tyr-AMP and then transferred to the acceptor end of tRNA(Tyr). This Porphyromonas gingivalis (strain ATCC BAA-308 / W83) protein is Tyrosine--tRNA ligase.